Consider the following 145-residue polypeptide: Large ribosomal subunit protein uL11 (145 aa).

This sequence belongs to the universal ribosomal protein uL11 family. In terms of assembly, part of the ribosomal stalk of the 50S ribosomal subunit. Interacts with L10 and the large rRNA to form the base of the stalk. L10 forms an elongated spine to which L12 dimers bind in a sequential fashion forming a multimeric L10(L12)X complex. In terms of processing, one or more lysine residues are methylated.

Forms part of the ribosomal stalk which helps the ribosome interact with GTP-bound translation factors. This Coxiella burnetii (strain Dugway 5J108-111) protein is Large ribosomal subunit protein uL11.